We begin with the raw amino-acid sequence, 117 residues long: Large ribosomal subunit protein uL18 (117 aa).

This sequence belongs to the universal ribosomal protein uL18 family. As to quaternary structure, part of the 50S ribosomal subunit; part of the 5S rRNA/L5/L18/L25 subcomplex. Contacts the 5S and 23S rRNAs.

Its function is as follows. This is one of the proteins that bind and probably mediate the attachment of the 5S RNA into the large ribosomal subunit, where it forms part of the central protuberance. This Idiomarina loihiensis (strain ATCC BAA-735 / DSM 15497 / L2-TR) protein is Large ribosomal subunit protein uL18.